The following is a 125-amino-acid chain: Probable 4-amino-4-deoxy-L-arabinose-phosphoundecaprenol flippase subunit ArnF (125 aa).

The Cytoplasmic segment spans residues 1 to 2 (MG). A helical transmembrane segment spans residues 3–23 (VMWGLISVAIASLAQLSLGFA). Residues 24–33 (MMRLPSIAHP) lie on the Periplasmic side of the membrane. A helical transmembrane segment spans residues 34 to 54 (LAFISGLGALNAATLALFAGL). Residues 55–76 (AGYLVSVFCWHKTLHTLALSKA) lie on the Cytoplasmic side of the membrane. Residues 77-97 (YALLSLSYVLVWVASMLLPGL) traverse the membrane as a helical segment. At 98 to 100 (QGA) the chain is on the periplasmic side. A helical transmembrane segment spans residues 101-121 (FSLKAMLGVLCIMAGVMLIFL). Over 122 to 125 (PARS) the chain is Cytoplasmic.

The protein belongs to the ArnF family. Heterodimer of ArnE and ArnF.

It localises to the cell inner membrane. It functions in the pathway bacterial outer membrane biogenesis; lipopolysaccharide biosynthesis. Functionally, translocates 4-amino-4-deoxy-L-arabinose-phosphoundecaprenol (alpha-L-Ara4N-phosphoundecaprenol) from the cytoplasmic to the periplasmic side of the inner membrane. The polypeptide is Probable 4-amino-4-deoxy-L-arabinose-phosphoundecaprenol flippase subunit ArnF (Salmonella agona (strain SL483)).